A 232-amino-acid chain; its full sequence is Ubiquinone biosynthesis O-methyltransferase (232 aa).

S-adenosyl-L-methionine is bound by residues arginine 36, glycine 55, aspartate 76, and leucine 120.

It belongs to the methyltransferase superfamily. UbiG/COQ3 family.

The enzyme catalyses a 3-demethylubiquinol + S-adenosyl-L-methionine = a ubiquinol + S-adenosyl-L-homocysteine + H(+). The catalysed reaction is a 3-(all-trans-polyprenyl)benzene-1,2-diol + S-adenosyl-L-methionine = a 2-methoxy-6-(all-trans-polyprenyl)phenol + S-adenosyl-L-homocysteine + H(+). It functions in the pathway cofactor biosynthesis; ubiquinone biosynthesis. Functionally, O-methyltransferase that catalyzes the 2 O-methylation steps in the ubiquinone biosynthetic pathway. In Pseudomonas paraeruginosa (strain DSM 24068 / PA7) (Pseudomonas aeruginosa (strain PA7)), this protein is Ubiquinone biosynthesis O-methyltransferase.